We begin with the raw amino-acid sequence, 203 residues long: Ribosomal RNA small subunit methyltransferase G (203 aa).

Residues Gly75, Leu80, 126–127, and Arg141 contribute to the S-adenosyl-L-methionine site; that span reads VE.

This sequence belongs to the methyltransferase superfamily. RNA methyltransferase RsmG family.

Its subcellular location is the cytoplasm. It catalyses the reaction guanosine(527) in 16S rRNA + S-adenosyl-L-methionine = N(7)-methylguanosine(527) in 16S rRNA + S-adenosyl-L-homocysteine. Functionally, specifically methylates the N7 position of guanine in position 527 of 16S rRNA. The chain is Ribosomal RNA small subunit methyltransferase G from Ruthia magnifica subsp. Calyptogena magnifica.